Consider the following 374-residue polypeptide: Protein-glutamate methylesterase/protein-glutamine glutaminase 1 (374 aa).

The Response regulatory domain occupies 4 to 121 (KVLVVDDSSF…ATNKDEAILL (118 aa)). A 4-aspartylphosphate modification is found at aspartate 55. The interval 141 to 170 (PSVAPVTPRPTTGSAVGNATTPVQSASAPV) is disordered. Residues 149 to 167 (RPTTGSAVGNATTPVQSAS) are compositionally biased toward polar residues. A CheB-type methylesterase domain is found at 174–374 (PLSSIRASGK…ESILKESARG (201 aa)). Catalysis depends on residues serine 193, histidine 220, and aspartate 316.

Belongs to the CheB family. In terms of processing, phosphorylated by CheA. Phosphorylation of the N-terminal regulatory domain activates the methylesterase activity.

It is found in the cytoplasm. The catalysed reaction is [protein]-L-glutamate 5-O-methyl ester + H2O = L-glutamyl-[protein] + methanol + H(+). It carries out the reaction L-glutaminyl-[protein] + H2O = L-glutamyl-[protein] + NH4(+). Involved in chemotaxis. Part of a chemotaxis signal transduction system that modulates chemotaxis in response to various stimuli. Catalyzes the demethylation of specific methylglutamate residues introduced into the chemoreceptors (methyl-accepting chemotaxis proteins or MCP) by CheR. Also mediates the irreversible deamidation of specific glutamine residues to glutamic acid. The chain is Protein-glutamate methylesterase/protein-glutamine glutaminase 1 from Shewanella oneidensis (strain ATCC 700550 / JCM 31522 / CIP 106686 / LMG 19005 / NCIMB 14063 / MR-1).